Reading from the N-terminus, the 67-residue chain is Small ribosomal subunit protein bS21 (67 aa).

This sequence belongs to the bacterial ribosomal protein bS21 family.

This Acidiphilium cryptum (strain JF-5) protein is Small ribosomal subunit protein bS21.